The primary structure comprises 164 residues: ATP synthase B' chain, cyanelle (164 aa).

A helical membrane pass occupies residues 26 to 46 (ATLPVMMVQLLVLMLILNAVF).

This sequence belongs to the ATPase B chain family. As to quaternary structure, F-type ATPases have 2 components, F(1) - the catalytic core - and F(0) - the membrane proton channel. F(1) has five subunits: alpha(3), beta(3), gamma(1), delta(1), epsilon(1). F(0) has four main subunits: a(1), b(1), b'(1) and c(10-14). The alpha and beta chains form an alternating ring which encloses part of the gamma chain. F(1) is attached to F(0) by a central stalk formed by the gamma and epsilon chains, while a peripheral stalk is formed by the delta, b and b' chains.

It localises to the plastid. It is found in the cyanelle thylakoid membrane. F(1)F(0) ATP synthase produces ATP from ADP in the presence of a proton or sodium gradient. F-type ATPases consist of two structural domains, F(1) containing the extramembraneous catalytic core and F(0) containing the membrane proton channel, linked together by a central stalk and a peripheral stalk. During catalysis, ATP synthesis in the catalytic domain of F(1) is coupled via a rotary mechanism of the central stalk subunits to proton translocation. Its function is as follows. Component of the F(0) channel, it forms part of the peripheral stalk, linking F(1) to F(0). The b'-subunit is a diverged and duplicated form of b found in plants and photosynthetic bacteria. In Cyanophora paradoxa, this protein is ATP synthase B' chain, cyanelle.